The chain runs to 178 residues: Ribulose bisphosphate carboxylase small subunit, chloroplastic (178 aa).

A chloroplast-targeting transit peptide spans methionine 1–arginine 55.

The protein belongs to the RuBisCO small chain family. Heterohexadecamer of 8 large and 8 small subunits.

It localises to the plastid. The protein localises to the chloroplast. RuBisCO catalyzes two reactions: the carboxylation of D-ribulose 1,5-bisphosphate, the primary event in carbon dioxide fixation, as well as the oxidative fragmentation of the pentose substrate. Both reactions occur simultaneously and in competition at the same active site. Although the small subunit is not catalytic it is essential for maximal activity. The polypeptide is Ribulose bisphosphate carboxylase small subunit, chloroplastic (Zantedeschia aethiopica (White calla lily)).